The chain runs to 389 residues: tRNA-specific 2-thiouridylase MnmA (389 aa).

Residues 35-42 and Met-61 each bind ATP; that span reads GMSGGVDS. The interval 121–123 is interaction with target base in tRNA; that stretch reads NPD. The active-site Nucleophile is the Cys-126. A disulfide bridge connects residues Cys-126 and Cys-223. Gly-151 lines the ATP pocket. The segment at 173–175 is interaction with tRNA; that stretch reads KDQ. Catalysis depends on Cys-223, which acts as the Cysteine persulfide intermediate. Residues 335 to 336 are interaction with tRNA; it reads RY.

The protein belongs to the MnmA/TRMU family.

Its subcellular location is the cytoplasm. The catalysed reaction is S-sulfanyl-L-cysteinyl-[protein] + uridine(34) in tRNA + AH2 + ATP = 2-thiouridine(34) in tRNA + L-cysteinyl-[protein] + A + AMP + diphosphate + H(+). In terms of biological role, catalyzes the 2-thiolation of uridine at the wobble position (U34) of tRNA, leading to the formation of s(2)U34. This Actinobacillus pleuropneumoniae serotype 3 (strain JL03) protein is tRNA-specific 2-thiouridylase MnmA.